The chain runs to 55 residues: Large ribosomal subunit protein bL33 (55 aa).

Belongs to the bacterial ribosomal protein bL33 family.

This Bordetella avium (strain 197N) protein is Large ribosomal subunit protein bL33.